The chain runs to 120 residues: NAD(P)H-quinone oxidoreductase subunit 3, chloroplastic (120 aa).

3 helical membrane passes run 9–29, 64–84, and 88–108; these read IFWA…LISG, MFAL…PWAM, and VLGV…ILGL.

It belongs to the complex I subunit 3 family. As to quaternary structure, NDH is composed of at least 16 different subunits, 5 of which are encoded in the nucleus.

Its subcellular location is the plastid. The protein resides in the chloroplast thylakoid membrane. It carries out the reaction a plastoquinone + NADH + (n+1) H(+)(in) = a plastoquinol + NAD(+) + n H(+)(out). The enzyme catalyses a plastoquinone + NADPH + (n+1) H(+)(in) = a plastoquinol + NADP(+) + n H(+)(out). Its function is as follows. NDH shuttles electrons from NAD(P)H:plastoquinone, via FMN and iron-sulfur (Fe-S) centers, to quinones in the photosynthetic chain and possibly in a chloroplast respiratory chain. The immediate electron acceptor for the enzyme in this species is believed to be plastoquinone. Couples the redox reaction to proton translocation, and thus conserves the redox energy in a proton gradient. In Arabidopsis thaliana (Mouse-ear cress), this protein is NAD(P)H-quinone oxidoreductase subunit 3, chloroplastic.